The sequence spans 157 residues: Polyferredoxin protein VhcB (157 aa).

4Fe-4S ferredoxin-type domains lie at 23–52 (NGISWDREKCEYCGPCAIKCPNDAIMVVNP), 62–92 (KTERANEFKMCDLCGTCVSACPTEALQMGKI), and 100–129 (DRIEFTPSLCDSCGACVEICPQNVLKLNEE). Residues cysteine 32, cysteine 35, cysteine 38, cysteine 42, cysteine 72, cysteine 75, cysteine 78, cysteine 82, cysteine 109, cysteine 112, cysteine 115, cysteine 119, cysteine 136, cysteine 139, cysteine 142, and cysteine 146 each contribute to the [4Fe-4S] cluster site.

Requires [4Fe-4S] cluster as cofactor.

The chain is Polyferredoxin protein VhcB (vhcB) from Methanococcus voltae.